Consider the following 421-residue polypeptide: UDP-N-acetylglucosamine 1-carboxyvinyltransferase (421 aa).

22 to 23 contributes to the phosphoenolpyruvate binding site; the sequence is KN. Position 94 (arginine 94) interacts with UDP-N-acetyl-alpha-D-glucosamine. The active-site Proton donor is cysteine 118. Cysteine 118 is subject to 2-(S-cysteinyl)pyruvic acid O-phosphothioketal. UDP-N-acetyl-alpha-D-glucosamine-binding positions include 163 to 166, aspartate 308, and isoleucine 330; that span reads KVSV.

It belongs to the EPSP synthase family. MurA subfamily.

Its subcellular location is the cytoplasm. The catalysed reaction is phosphoenolpyruvate + UDP-N-acetyl-alpha-D-glucosamine = UDP-N-acetyl-3-O-(1-carboxyvinyl)-alpha-D-glucosamine + phosphate. It functions in the pathway cell wall biogenesis; peptidoglycan biosynthesis. Cell wall formation. Adds enolpyruvyl to UDP-N-acetylglucosamine. This is UDP-N-acetylglucosamine 1-carboxyvinyltransferase from Orientia tsutsugamushi (strain Boryong) (Rickettsia tsutsugamushi).